The chain runs to 190 residues: METPALLALAVALAMDALAVAVATGCRLRTVSARQTLRLAWHFGLFQAAMPIAGWFMGQGIRSFVDAWAHWIAFGLLAFIGLKMLKEAFEHDDAECGMADPTRGTSLIMLSVATSIDALAVGVTLSMLGLSIWMPAAVIGLVCLGLTAAGVQLGRVLAASSALSRYAEILGGAVLLGIGFKILHESGVFG.

A run of 6 helical transmembrane segments spans residues 5-25, 41-61, 64-84, 105-125, 127-147, and 169-189; these read ALLA…VATG, WHFG…GQGI, FVDA…GLKM, TSLI…GVTL, MLGL…LGLT, and ILGG…SGVF.

This sequence belongs to the MntP (TC 9.B.29) family.

It localises to the cell inner membrane. Probably functions as a manganese efflux pump. The chain is Putative manganese efflux pump MntP from Oleidesulfovibrio alaskensis (strain ATCC BAA-1058 / DSM 17464 / G20) (Desulfovibrio alaskensis).